We begin with the raw amino-acid sequence, 422 residues long: Probable protease eep (422 aa).

His18 provides a ligand contact to Zn(2+). The active site involves Glu19. His22 lines the Zn(2+) pocket. 3 helical membrane-spanning segments follow: residues 176-196 (FAGPMNNFILGFILFTLAVFL), 349-369 (VVFLMAMLSMNLGIINLLPIP), and 394-414 (EGIITLIGFGFVMVLMVLVTW). The PDZ domain occupies 179–273 (PMNNFILGFI…EEQLTVTPEK (95 aa)).

This sequence belongs to the peptidase M50B family. It depends on Zn(2+) as a cofactor.

It is found in the cell membrane. Functionally, involved in production of the peptide pheromone cAD1. The polypeptide is Probable protease eep (eep) (Enterococcus faecalis (strain ATCC 700802 / V583)).